Reading from the N-terminus, the 656-residue chain is Probable Xaa-Pro aminopeptidase P (656 aa).

D453, D464, E562, and E576 together coordinate Mn(2+).

This sequence belongs to the peptidase M24B family. The cofactor is Mn(2+).

The enzyme catalyses Release of any N-terminal amino acid, including proline, that is linked to proline, even from a dipeptide or tripeptide.. Catalyzes the removal of a penultimate prolyl residue from the N-termini of peptides. The polypeptide is Probable Xaa-Pro aminopeptidase P (ampp) (Pyrenophora teres f. teres (strain 0-1) (Barley net blotch fungus)).